A 729-amino-acid chain; its full sequence is MAAAWSWRASHSTITMTSGSLVVLFLLLSIWQPAVQVEGRRQMANSQEMIKDHLGARSQNKTPAITNNANQSSTSSADLDDGAADDDDNKADLPVNVSSKPYWRNPKKMSFLQTRPSGSLLTLNCHALGNPEPNITWYRNGTVDWTRGYGSLKRNRWTLTMEDLVPGDCGNYTCKVCNSLGCIRHDTQVIVSDRVNHKPILMTGPLNLTLVVNSTGSMHCKYLSDLTSKKAWIFVPCHGMTNCSNNRSIIAEDKDQLDFVNVRMEQEGWYTCVESNSLGQSNSTAYLRVVRSLHVLEAGVASGSLHSTSFVYIFVFGGLIFIFMTTLFVFYAIRKMKHEKVLKQRIETVHQWTKKVIIFKPEGGGDSSGSMDTMIMPVVRIQKQRTTVLQNGNEPAPFNEYEFPLDSNWELPRSHLVLGATLGEGAFGRVVMAEVNNAIVAVKMVKEGHTDDDIASLVREMEVMKIIGRHINIINLLGCCSQNGPLYVIVEYAPHGNLKDFLYKNRPFGRDQDRDSSQPPPSPPAHVITEKDLIKFAHQIARGMDYLASRRCIHRDLAARNVLVSDDYVLKIADFGLARDIQSTDYYRKNTNGRLPIKWMAPESLQEKFYDSKSDVWSYGILLWEIMTYGQQPYPTIMSAEELYTYLMSGQRMEKPAKCSMNIYILMRQCWHFNADDRPPFTEIVEYMDKLLQTKEDYLDVDIANLDTPPSTSDEEEDETDNLQKWCNY.

The first 36 residues, 1 to 36 (MAAAWSWRASHSTITMTSGSLVVLFLLLSIWQPAVQ), serve as a signal peptide directing secretion. Over 37-309 (VEGRRQMANS…VASGSLHSTS (273 aa)) the chain is Extracellular. The tract at residues 56–101 (ARSQNKTPAITNNANQSSTSSADLDDGAADDDDNKADLPVNVSSKP) is disordered. The span at 66–77 (TNNANQSSTSSA) shows a compositional bias: low complexity. The N-linked (GlcNAc...) asparagine glycan is linked to Asn-70. The segment covering 78 to 89 (DLDDGAADDDDN) has biased composition (acidic residues). Asn-96, Asn-134, Asn-140, Asn-171, Asn-207, Asn-213, Asn-242, Asn-246, and Asn-282 each carry an N-linked (GlcNAc...) asparagine glycan. Ig-like C2-type domains lie at 106–192 (PKKM…VIVS) and 203–279 (TGPL…NSLG). Residues Cys-125 and Cys-174 are joined by a disulfide bond. Cysteines 220 and 272 form a disulfide. A helical membrane pass occupies residues 310–330 (FVYIFVFGGLIFIFMTTLFVF). The Cytoplasmic segment spans residues 331–729 (YAIRKMKHEK…TDNLQKWCNY (399 aa)). Positions 416-692 (LVLGATLGEG…EIVEYMDKLL (277 aa)) constitute a Protein kinase domain. Residues 422–430 (LGEGAFGRV) and Lys-443 contribute to the ATP site. Asp-556 serves as the catalytic Proton acceptor. Phosphotyrosine; by autocatalysis is present on Tyr-587.

Belongs to the protein kinase superfamily. Tyr protein kinase family. Fibroblast growth factor receptor subfamily. As to expression, in early embryos, expression is specific to mesodermal primordium and invaginated mesodermal cells. At later stages, expression is seen in putative muscle precursor cells and in the CNS.

It is found in the membrane. It carries out the reaction L-tyrosyl-[protein] + ATP = O-phospho-L-tyrosyl-[protein] + ADP + H(+). Functionally, may be required for patterning of muscle precursor cells. May be essential for generation of mesodermal and endodermal layers, invaginations of various types of cells and CNS formation. This is Fibroblast growth factor receptor homolog 1 (htl) from Drosophila melanogaster (Fruit fly).